Here is a 238-residue protein sequence, read N- to C-terminus: 3-dehydroquinate dehydratase (238 aa).

Residues 35–37 (ELR) and arginine 68 contribute to the 3-dehydroquinate site. Histidine 131 acts as the Proton donor/acceptor in catalysis. The active-site Schiff-base intermediate with substrate is the lysine 158. 3-dehydroquinate is bound by residues arginine 200 and glutamine 223.

It belongs to the type-I 3-dehydroquinase family. Homodimer.

It carries out the reaction 3-dehydroquinate = 3-dehydroshikimate + H2O. It participates in metabolic intermediate biosynthesis; chorismate biosynthesis; chorismate from D-erythrose 4-phosphate and phosphoenolpyruvate: step 3/7. Involved in the third step of the chorismate pathway, which leads to the biosynthesis of aromatic amino acids. Catalyzes the cis-dehydration of 3-dehydroquinate (DHQ) and introduces the first double bond of the aromatic ring to yield 3-dehydroshikimate. The polypeptide is 3-dehydroquinate dehydratase (Staphylococcus epidermidis (strain ATCC 35984 / DSM 28319 / BCRC 17069 / CCUG 31568 / BM 3577 / RP62A)).